The chain runs to 551 residues: Xylulose kinase (551 aa).

Substrate contacts are provided by His-114, Arg-185, Asp-295, and Asn-296. ATP is bound by residues Trp-370, 456–457 (GA), and Asn-460.

Belongs to the FGGY kinase family. Monomer.

It carries out the reaction D-xylulose + ATP = D-xylulose 5-phosphate + ADP + H(+). Phosphorylates D-xylulose to produce D-xylulose 5-phosphate, a molecule that may play an important role in the regulation of glucose metabolism and lipogenesis. The chain is Xylulose kinase (Xylb) from Mus musculus (Mouse).